A 225-amino-acid chain; its full sequence is Probable polyketide biosynthesis zinc-dependent hydrolase PksB (225 aa).

7 residues coordinate Zn(2+): H62, H64, D66, H67, H123, D140, and H181.

This sequence belongs to the metallo-beta-lactamase superfamily. It depends on Zn(2+) as a cofactor.

Its subcellular location is the cytoplasm. It functions in the pathway antibiotic biosynthesis; bacillaene biosynthesis. Probably involved in some intermediate steps for the synthesis of the antibiotic polyketide bacillaene which is involved in secondary metabolism. The protein is Probable polyketide biosynthesis zinc-dependent hydrolase PksB (pksB) of Bacillus subtilis (strain 168).